Consider the following 62-residue polypeptide: Large ribosomal subunit protein eL24 (62 aa).

Zn(2+)-binding residues include Cys6, Cys9, Cys32, and Cys36. The C4-type zinc-finger motif lies at Cys6–Cys36.

It belongs to the eukaryotic ribosomal protein eL24 family. In terms of assembly, part of the 50S ribosomal subunit. Forms a cluster with proteins L3 and L14. The cofactor is Zn(2+).

In terms of biological role, binds to the 23S rRNA. The polypeptide is Large ribosomal subunit protein eL24 (Methanococcus vannielii (strain ATCC 35089 / DSM 1224 / JCM 13029 / OCM 148 / SB)).